Here is a 199-residue protein sequence, read N- to C-terminus: Nuclear protein UL4 (199 aa).

This sequence belongs to the alphaherpesvirinae HHV-1 UL4 family.

It is found in the host nucleus. This is Nuclear protein UL4 from Homo sapiens (Human).